We begin with the raw amino-acid sequence, 364 residues long: Probable methyltransferase ICS2 (364 aa).

S-adenosyl-L-homocysteine-binding residues include Tyr-18, Cys-61, Asp-98, Leu-99, Ser-133, and Phe-134. Mg(2+) is bound by residues Asn-172, Asp-258, Phe-260, and Asn-261.

The protein belongs to the methyltransferase superfamily. Type-7 methyltransferase family. It depends on Mg(2+) as a cofactor.

Its function is as follows. No detectable N-methyltransferase activity. The sequence is that of Probable methyltransferase ICS2 from Camellia irrawadiensis (Burmese tea).